Here is a 101-residue protein sequence, read N- to C-terminus: MAKLSIKQRELKREQLVAKFAKKYAELKAIINDAGKSDEERYTARLALQKLPRNAYPSRLRNRCELTGRPRGTFRTFGLARNKIRELAFKGDIPGVVKASW.

This sequence belongs to the universal ribosomal protein uS14 family. As to quaternary structure, part of the 30S ribosomal subunit. Contacts proteins S3 and S10.

In terms of biological role, binds 16S rRNA, required for the assembly of 30S particles and may also be responsible for determining the conformation of the 16S rRNA at the A site. The polypeptide is Small ribosomal subunit protein uS14 (Methylibium petroleiphilum (strain ATCC BAA-1232 / LMG 22953 / PM1)).